The chain runs to 116 residues: MEAKAVGKHLRISARKARLVADEVRGYDYKEAIDILRFTNKAASSMIINLLNSAVANAIQMNESLDPNSLFVKKIYVDDGPIMKRFRPRARGRASRIRKRLSHITVVVSEIEKKVS.

This sequence belongs to the universal ribosomal protein uL22 family. In terms of assembly, part of the 50S ribosomal subunit.

In terms of biological role, this protein binds specifically to 23S rRNA; its binding is stimulated by other ribosomal proteins, e.g. L4, L17, and L20. It is important during the early stages of 50S assembly. It makes multiple contacts with different domains of the 23S rRNA in the assembled 50S subunit and ribosome. Its function is as follows. The globular domain of the protein is located near the polypeptide exit tunnel on the outside of the subunit, while an extended beta-hairpin is found that lines the wall of the exit tunnel in the center of the 70S ribosome. This chain is Large ribosomal subunit protein uL22, found in Leptospira biflexa serovar Patoc (strain Patoc 1 / Ames).